Consider the following 614-residue polypeptide: Zinc metalloproteinase-disintegrin-like BmMP (614 aa).

Residues 1–20 (MIQALLVTICLAVFPYQGSS) form the signal peptide. Residues 21–188 (IILESGNVND…WESDEPIRNA (168 aa)) constitute a propeptide that is removed on maturation. N-linked (GlcNAc...) asparagine glycosylation occurs at N187. Positions 205–401 (KYIEFYVAVD…DRPQCILNKP (197 aa)) constitute a Peptidase M12B domain. 17 disulfide bridges follow: C316–C396, C356–C380, C359–C364, C412–C441, C423–C436, C425–C431, C435–C458, C449–C455, C454–C480, C467–C487, C474–C506, C499–C511, C518–C568, C533–C576, C546–C556, C563–C602, and C596–C607. Residue H341 coordinates Zn(2+). E342 is a catalytic residue. Zn(2+) contacts are provided by H345 and H351. In terms of domain architecture, Disintegrin spans 409–495 (PAICGNYFVE…ECPTDIFRRN (87 aa)). The short motif at 473-475 (DCD) is the D/ECD-tripeptide element.

Belongs to the venom metalloproteinase (M12B) family. P-III subfamily. P-IIIa sub-subfamily. As to quaternary structure, monomer. Zn(2+) serves as cofactor. Expressed by the venom gland.

The protein localises to the secreted. In terms of biological role, snake venom zinc metalloproteinase that inhibits platelet aggregation and degrades fibrinogen. The protein is Zinc metalloproteinase-disintegrin-like BmMP of Bungarus multicinctus (Many-banded krait).